Reading from the N-terminus, the 264-residue chain is Small ribosomal subunit protein eS1A (264 aa).

The tract at residues 233–264 (GEGGGTGKPAGDETGAKVERADGYEPPVQESV) is disordered. A compositionally biased stretch (basic and acidic residues) spans 242–255 (AGDETGAKVERADG).

It belongs to the eukaryotic ribosomal protein eS1 family. In terms of assembly, component of the small ribosomal subunit. Mature ribosomes consist of a small (40S) and a large (60S) subunit. The 40S subunit contains about 33 different proteins and 1 molecule of RNA (18S). The 60S subunit contains about 49 different proteins and 3 molecules of RNA (28S, 5.8S and 5S). Part of the small subunit (SSU) processome, composed of more than 70 proteins and the RNA chaperone small nucleolar RNA (snoRNA) U3.

Its subcellular location is the cytoplasm. It is found in the nucleus. The protein localises to the nucleolus. In terms of biological role, component of the small ribosomal subunit. The ribosome is a large ribonucleoprotein complex responsible for the synthesis of proteins in the cell. Part of the small subunit (SSU) processome, first precursor of the small eukaryotic ribosomal subunit. During the assembly of the SSU processome in the nucleolus, many ribosome biogenesis factors, an RNA chaperone and ribosomal proteins associate with the nascent pre-rRNA and work in concert to generate RNA folding, modifications, rearrangements and cleavage as well as targeted degradation of pre-ribosomal RNA by the RNA exosome. May play a role during erythropoiesis. In Xenopus laevis (African clawed frog), this protein is Small ribosomal subunit protein eS1A (rps3a-a).